The primary structure comprises 115 residues: Non-specific lipid-transfer protein 4.1 (115 aa).

The N-terminal stretch at Met1–Ala25 is a signal peptide. Intrachain disulfides connect Cys29–Cys77, Cys39–Cys54, Cys55–Cys97, and Cys75–Cys111.

Belongs to the plant LTP family.

In terms of biological role, plant non-specific lipid-transfer proteins transfer phospholipids as well as galactolipids across membranes. May play a role in wax or cutin deposition in the cell walls of expanding epidermal cells and certain secretory tissues. This chain is Non-specific lipid-transfer protein 4.1 (LTP4.1), found in Hordeum vulgare (Barley).